Consider the following 411-residue polypeptide: Prophage integrase IntR (411 aa).

Residues Lys-81 to Tyr-176 form the Core-binding (CB) domain. In terms of domain architecture, Tyr recombinase spans Ile-197 to Ala-404. Residues Arg-231, Lys-266, Arg-358, and His-381 contribute to the active site. Residue Tyr-391 is the O-(3'-phospho-DNA)-tyrosine intermediate of the active site.

This sequence belongs to the 'phage' integrase family.

In terms of biological role, integrase is necessary for integration of the phage into the host genome by site-specific recombination. In conjunction with excisionase, integrase is also necessary for excision of the prophage from the host genome. The protein is Prophage integrase IntR (intR) of Escherichia coli (strain K12).